The following is a 198-amino-acid chain: Imidazoleglycerol-phosphate dehydratase (198 aa).

The protein belongs to the imidazoleglycerol-phosphate dehydratase family.

Its subcellular location is the cytoplasm. It catalyses the reaction D-erythro-1-(imidazol-4-yl)glycerol 3-phosphate = 3-(imidazol-4-yl)-2-oxopropyl phosphate + H2O. The protein operates within amino-acid biosynthesis; L-histidine biosynthesis; L-histidine from 5-phospho-alpha-D-ribose 1-diphosphate: step 6/9. This is Imidazoleglycerol-phosphate dehydratase from Gluconobacter oxydans (strain 621H) (Gluconobacter suboxydans).